Reading from the N-terminus, the 3295-residue chain is MNKNLYRIVFNQARGMLMVVADIAASGRAASSPSSGVGHTQRRRVSALSPLSFRLLIALGCISLSAQAAIVADGSAPGNQQPTIISSANGTPQVNIQTPSSGGVSRNAYRQFDVDNRGVILNNGRGVNQTQIAGLVDGNPWLARGEASVILNEVNSRDPSQLNGYIEVAGRKAQVVIANPAGITCEGCGFINANRATLTTGQAQLNNGQLTGYDVERGEIVIQGKGLDSRGQDHTDLIARSVKVNAGIWANELNITTGRNQVDAAHQNINTNAADGRHRPAVAVDVANLGGMYAGKIRLIGTETGVGVHNAGEIGASAGDIVITADGMLVNRGQISSAQQLAVNTPSGIENSGVLYGKGNTQLTTAGKLSNSGTVAAAGDTLIRAAEVNSSRNSVLGAGIKSDNSAITRGTLDIKARGQLTAQGKNISGTAQTFNANRIDLSGSQTQSGDLTFTTEGGDIDLTGANLFANRRLSVSTPSLLRTDKANLFAEQIALDAQALANVGGVITQTGLTDFNLNLPGDIDNRDGTLLTRGNFLLQAEHLTSNSQSLLGAGIQSDGKLAPRGDLNVTTRHALIAQGKTLTAGTLALSGSRLDLTDSLTQAKYMRLTATEGDIALTGATVMAANTLFADTRQILRSDKAYLTADQINLTAYSLSNVEGRVVQKGSGDFRLDLPGYLDNRGGVLLTKGNLALQAERLTSNSQSLLGAGIQADGSKASKGDLQANTTQALIAQGQNVAAGTMTLSGSRVDLTGSQTHASNITITARDGDVTTREATLITPGTLSMTAVANPEQTLNNRGGKLHADNIQLNLAKLENSNGEIAAATDLWLRLQSDFIHQAGARLTAGRDLLFNSRGALINQYKLEAGRDMQLTALSIRNTSADRNTNADNSSLLAGRGLSLSTDSLFNRGAIYTTGVGQFTVNGNTENIGEIYTEQQLTFTATGNLANRGVMQTRGEMQLSAQGDVNNSGMLYSAGDQMRLSIAGNLTNEGKLHVANGEMRLLTEGNLDNRGSLYGAGNSDITTQGNAVNTGSVYTQGALQWLTKGSVRNSASIAALGDLQLRANDLLSDNQSLMAAGLKADGSRSDSGNLAVSTEQALIAQGQNIAAGSLALAGSQIDLTGSQTQANAISLTAKSGDITLTSAVIKAATQLLVTQLAATRSSFIPPSSIPPSSTQSSSTQASASPSAWLRTDKASLIADQLTFDVQALSNLGGVIAQTGATDFNLNLPGYLDNRGGTILSKGNVAIQAQGLDSDSGSLLGAGVQSDGKLTNAGDLAVTVRQDLIAHGQSLAAGAMTLTGSGVDLTGSQTQARGITITANKGDVSTQRANILSLGSLAINAGANAGQTLNNQGGSLQANNIALNLGQLDNRTGKIAASQDLVLGLQSDFNILADSTLQAGRDFSFTTHGALTNDGQLLAGRKLSTRSNSLLNNGNIRAVQADLRASGALTNRGEILTRGGLSTDANTLFNSGTLIGATATLNARERITNSGPNALIGATDKNGTLALLAPVIENSDTVTRTDTAPTTTLLGMGKVILAGGQDNSGNYSSAAQVLNLSGLIESGNDLLVYAKTLTNRRQILTATTDFIVGDTETGAAYWTAENPDIPGGRYTQPPAGGPMNSDYIGTNYTSTVAYNRIDQISPEAQLLAGGNLTLQVGTLENNWSKVSAQGVIDLTGVTLQQDDWGSQQRLVEQTTSSGEYRYRTYKGKLWGIAWGPEMKLRLNNQYASSITAKTLTGSGTVINNTVINNGAAPGAIVAPRDRDSTGKNIAVEFNGIALTLPRSGLYQLKTDKGDYAPGPEAALSLANISPPSSLDATGPRGVPPPSDDLNRTGLVTPDRAVSGGYLVETHPAFASLNNWKGSDLYLQQLSSDPSVIHKRLGDNAYEQRLLRDQVLALTGRTVASDYRSEQAQFEQLFAAGVQYSKAFNLAPGTRLSAEQMATLTGNIVLMENRDVAGQTVLVPVVYLAGVKPGDLRANGALIAAENISLTEVQGFANAGAISASNNLQISMAKDITLNNRCGLLQAGNHLQLSTLNSDIDLTSARLNATNLQLDSGRDVILRTASDQYSSGNGAVQRTQTILGPLASLNISNNAVITAQRDFIQQGAGINIGKDLQVNTGGDWLLSTVQRSDQISAQYGGGSATSGSLRHLGSEVKVGGALSANVDNLTAVGARVNAGTIDVRAQNITLSAATDSLSVTGGSSSKRHTSSVNLYDETLLGSQLNATGDINLQTVNDITLSASAVQTDGALKLAAGGDVTLTSQTEQHDEQRNHTGTKKGLLSSTTTRSEEGRSQTLAVGSMLSAGSIDVSSQNIAVAGSSVVADKDIRLRAQENLTVSTAQQSESGSQLFEQKKSGLMSTGGIGVFIGTSRQKTTDQTQTVSHVGSTVGSLTGNVRLEAGNQLTLHGSDVVAGKDLALTGADVAISAAENSRSQQYTAESKQRGLTVALSGPVGSAVNTAVTTAKAAREENTGRLAGLQGVKAALSGVQAVQAGQLVQAQGGGITEMVGVSVSLGSQKSSSQQQQEQTQVSGSALTAGNNLSIKASGSDILIAGSQLKAGGDTRLDAARDVQLLGAANRQKTDGSNSSRGGSVGVSVGGSGLSVFANANKGQGNERGDGTFWTETTVDSGGMFSLRSGRDTALTGAQVSAETVKADVGRNLTLQSQQDRDNYDAKQSRASGGISVPVAGGGAAVNLSMSRDRLSSQYDSVQAQTGIFAGSGGVDIRVGEHTQLDGAVIASTAAADKNTLDTGTLGFSDIKNKAVFTVEHQGGSLSTGGPVGSDLLSNLGGMVLAGLGNGGYAEGTTQAAVSEGTITVRDTENQQQNVDDLSRDTGNANGSIGPIFDKEKEQNRLKEVQLIGEIGGQALDIASTQGKIIATHAANDKMKAVKPEDIAAAEKQWEKAHPGKAATAEDINQQIYQTAYNQAFNESGFGTGGPVQRGMQAATAAVQGLAGGNMGAALTGASAPYLAGVIKQSTGDNPAANTMAHAVLGAVTAYASGNNALAGAAGAATAELMAPTIISALGWDKNTLTEGQKQAVSALSTLAAGLAGGLTGDSTADALAGGQAGKNAVENNLLGGNEFTHTQFVQKHGADVLSCADNPSNAACQRGIAENKAYIAALATGSVALLPGSSQAMWALGAGTNAGMQYADNGKINPVNSVAAGWINVITMGQGWKGTIAWNAAGGALINAINGGDPLTGAITNGTGAGFGYGVGNYVVKPAANTLGKWITGGWNPKFDPNLLKYAEVKGQLGISKEMLPSKIPSAVGNAGGSLSSEFGSSLIQQKKDAMEDSK.

Residues 33–366 (PSSGVGHTQR…GKGNTQLTTA (334 aa)) form a two-partner system transport domain (TPS) region. A helical transmembrane segment spans residues 55 to 75 (LLIALGCISLSAQAAIVADGS). The interval 353 to 1574 (GVLYGKGNTQ…LLVYAKTLTN (1222 aa)) is FHA-1. Positions 1165–1185 (PPSSIPPSSTQSSSTQASASP) are disordered. The segment at 1575–1796 (RRQILTATTD…LKTDKGDYAP (222 aa)) is receptor binding domain (RBD). Positions 1797–1977 (GPEAALSLAN…GVKPGDLRAN (181 aa)) are YP domain. Residues 1806–1831 (NISPPSSLDATGPRGVPPPSDDLNRT) are disordered. Residues 1998–2035 (GAISASNNLQISMAKDITLNNRCGLLQAGNHLQLSTLN) form a periplasmic FHA-1 repeat (pFR) region. Positions 2022–2676 (LLQAGNHLQL…DRDNYDAKQS (655 aa)) are FHA-2. 2 disordered regions span residues 2260-2292 (TSQTEQHDEQRNHTGTKKGLLSSTTTRSEEGRS) and 2823-2847 (QQNVDDLSRDTGNANGSIGPIFDKE). The span at 2823–2838 (QQNVDDLSRDTGNANG) shows a compositional bias: polar residues. The VENN CT cleavage motif motif lies at 3073–3076 (VENN). The CT domain stretch occupies residues 3073–3295 (VENNLLGGNE…QKKDAMEDSK (223 aa)). The interval 3276-3295 (SSEFGSSLIQQKKDAMEDSK) is disordered. Over residues 3286 to 3295 (QKKDAMEDSK) the composition is skewed to basic and acidic residues.

This sequence in the N-terminal section; belongs to the CdiA toxin family. In terms of assembly, probably interacts with cognate immunity protein CdiI.

The protein resides in the membrane. It localises to the target cell. The protein localises to the target cell cytoplasm. Functionally, toxic component of a toxin-immunity protein module, which functions as a cellular contact-dependent growth inhibition (CDI) system. CDI modules allow bacteria to communicate with and inhibit the growth of closely related neighboring bacteria in a contact-dependent fashion. CDI is neutralized by its cognate immunity protein CdiI, but not by non-cognate CdiI from other bacteria. In terms of biological role, the CdiA protein is thought to be exported from the cell through the central lumen of CdiB, the other half of its two-partner system (TPS). The TPS domain probably remains associated with CdiB while the FHA-1 domain forms an extended filament with the receptor-binding domain (RBD) at its extremity; in the secretion arrested state the C-terminus of the RBD and YP domains form a hairpin-like structure as the FHA-2, PT and CT domains are periplasmic. The YP domain is probably responsible for this arrest at the point where it re-enters the host cell periplasm. Upon binding to a target cell outer membrane receptor a signal is transmitted to activate secretion. The filament elongates slightly, the rest of CdiA is secreted and the FHA-2 domain becomes stably associated with the target cell's outer membrane where it facilitates entry of the toxic CT domain into the target cell periplasm. From there the toxic CT domain is cleaved and gains access to the target cell cytoplasm via an inner membrane protein. The protein is Toxin CdiA of Yersinia pestis.